A 159-amino-acid chain; its full sequence is Cytochrome c-type biogenesis protein CcmE (159 aa).

The Cytoplasmic segment spans residues 1–8; it reads MNIRRKNR. Residues 9–29 traverse the membrane as a helical; Signal-anchor for type II membrane protein segment; that stretch reads LWIACAVLAGLALTIGLVLYA. Over 30-159 the chain is Periplasmic; that stretch reads LRSNIDLFYT…PASVYKDPAS (130 aa). Heme-binding residues include H130 and Y134. Positions 132–147 are enriched in basic and acidic residues; it reads ENYTPPEVEKAMEANH. Positions 132–159 are disordered; the sequence is ENYTPPEVEKAMEANHRRPASVYKDPAS.

Belongs to the CcmE/CycJ family.

It is found in the cell inner membrane. Heme chaperone required for the biogenesis of c-type cytochromes. Transiently binds heme delivered by CcmC and transfers the heme to apo-cytochromes in a process facilitated by CcmF and CcmH. This chain is Cytochrome c-type biogenesis protein CcmE, found in Escherichia coli (strain 55989 / EAEC).